Consider the following 206-residue polypeptide: Thymidylate kinase (206 aa).

11 to 18 (GIDGAGKT) is a binding site for ATP.

The protein belongs to the thymidylate kinase family.

The enzyme catalyses dTMP + ATP = dTDP + ADP. Functionally, phosphorylation of dTMP to form dTDP in both de novo and salvage pathways of dTTP synthesis. The chain is Thymidylate kinase from Burkholderia thailandensis (strain ATCC 700388 / DSM 13276 / CCUG 48851 / CIP 106301 / E264).